A 113-amino-acid chain; its full sequence is Small ribosomal subunit protein uS17 (113 aa).

The protein belongs to the universal ribosomal protein uS17 family. In terms of assembly, part of the 30S ribosomal subunit.

Functionally, one of the primary rRNA binding proteins, it binds specifically to the 5'-end of 16S ribosomal RNA. The sequence is that of Small ribosomal subunit protein uS17 from Pyrococcus furiosus (strain ATCC 43587 / DSM 3638 / JCM 8422 / Vc1).